We begin with the raw amino-acid sequence, 64 residues long: Cytochrome b-c1 complex subunit 9 (64 aa).

Residues 2 to 18 (SSPTIPSRLYSLLFRRT) are Mitochondrial matrix-facing. A helical membrane pass occupies residues 19 to 43 (STFALTIAVGALFFERAFDQGADAI). The Mitochondrial intermembrane segment spans residues 44-63 (YEHINEGKLWKHIKHKYENK).

Belongs to the UQCR10/QCR9 family. As to quaternary structure, component of the ubiquinol-cytochrome c oxidoreductase (cytochrome b-c1 complex, complex III, CIII), a multisubunit enzyme composed of 11 subunits. The complex is composed of 3 respiratory subunits cytochrome b, cytochrome c1 and Rieske protein UQCRFS1, 2 core protein subunits UQCRC1/QCR1 and UQCRC2/QCR2, and 6 low-molecular weight protein subunits UQCRH/QCR6, UQCRB/QCR7, UQCRQ/QCR8, UQCR10/QCR9, UQCR11/QCR10 and subunit 9, the cleavage product of Rieske protein UQCRFS1. The complex exists as an obligatory dimer and forms supercomplexes (SCs) in the inner mitochondrial membrane with NADH-ubiquinone oxidoreductase (complex I, CI) and cytochrome c oxidase (complex IV, CIV), resulting in different assemblies (supercomplex SCI(1)III(2)IV(1) and megacomplex MCI(2)III(2)IV(2)). Interacts with STMP1.

The protein resides in the mitochondrion inner membrane. Functionally, component of the ubiquinol-cytochrome c oxidoreductase, a multisubunit transmembrane complex that is part of the mitochondrial electron transport chain which drives oxidative phosphorylation. The respiratory chain contains 3 multisubunit complexes succinate dehydrogenase (complex II, CII), ubiquinol-cytochrome c oxidoreductase (cytochrome b-c1 complex, complex III, CIII) and cytochrome c oxidase (complex IV, CIV), that cooperate to transfer electrons derived from NADH and succinate to molecular oxygen, creating an electrochemical gradient over the inner membrane that drives transmembrane transport and the ATP synthase. The cytochrome b-c1 complex catalyzes electron transfer from ubiquinol to cytochrome c, linking this redox reaction to translocation of protons across the mitochondrial inner membrane, with protons being carried across the membrane as hydrogens on the quinol. In the process called Q cycle, 2 protons are consumed from the matrix, 4 protons are released into the intermembrane space and 2 electrons are passed to cytochrome c. The chain is Cytochrome b-c1 complex subunit 9 (Uqcr10) from Mus musculus (Mouse).